We begin with the raw amino-acid sequence, 224 residues long: Lipoprotein-releasing system ATP-binding protein LolD (224 aa).

Residues 5-224 form the ABC transporter domain; that stretch reads LEILDVSKCY…SLSGGMLTEL (220 aa). 40–47 is an ATP binding site; that stretch reads GSSGSGKS.

Belongs to the ABC transporter superfamily. Lipoprotein translocase (TC 3.A.1.125) family. In terms of assembly, the complex is composed of two ATP-binding proteins (LolD) and two transmembrane proteins (LolC and LolE).

The protein localises to the cell inner membrane. Its function is as follows. Part of the ABC transporter complex LolCDE involved in the translocation of mature outer membrane-directed lipoproteins, from the inner membrane to the periplasmic chaperone, LolA. Responsible for the formation of the LolA-lipoprotein complex in an ATP-dependent manner. The polypeptide is Lipoprotein-releasing system ATP-binding protein LolD (Anaplasma marginale (strain St. Maries)).